The chain runs to 782 residues: Chaoptin (782 aa).

LRR repeat units follow at residues 16–37 (SLLT…PSDA), 43–64 (RLEE…SFHF), 67–88 (SLKK…TFQG), 93–114 (DLTE…TFAD), 117–138 (QLEQ…AFMN), 141–162 (SLKR…TFQN), 165–186 (ELED…IFDQ), 191–212 (GMFH…PSVP), 224–245 (NIKV…FFRP), 249–270 (SLMQ…LFGN), 273–294 (HLQV…TFRN), 297–318 (KLQW…LFRF), 321–342 (NLRI…LFRE), 344–364 (GLER…TSLS), 370–391 (TLSE…GQLA), 395–416 (CLSW…TFKG), 419–442 (RLAS…SFQG), 446–467 (TLLH…STPN), 468–488 (LLSL…VAGN), 491–512 (SLRY…THSL), 514–535 (ELRH…SLLG), and 539–560 (QLEE…AFCK). Residues Asn196, Asn234, and Asn262 are each glycosylated (N-linked (GlcNAc...) asparagine). N-linked (GlcNAc...) asparagine glycans are attached at residues Asn454 and Asn488. An N-linked (GlcNAc...) asparagine glycan is attached at Asn530. N-linked (GlcNAc...) asparagine glycans are attached at residues Asn618, Asn648, and Asn667.

This sequence belongs to the chaoptin family.

Its subcellular location is the cell membrane. Its function is as follows. Required for photoreceptor cell morphogenesis. Mediates homophilic cellular adhesion. The sequence is that of Chaoptin (CHP) from Tribolium castaneum (Red flour beetle).